Reading from the N-terminus, the 401-residue chain is uncharacterized protein (401 aa).

[4Fe-4S] cluster-binding residues include Cys7, Cys13, Cys16, and Cys94. Residues Gln230, Tyr259, Glu280, and Asp328 each contribute to the S-adenosyl-L-methionine site. Catalysis depends on Cys355, which acts as the Nucleophile.

Belongs to the class I-like SAM-binding methyltransferase superfamily. RNA M5U methyltransferase family.

This is an uncharacterized protein from Chlamydia caviae (strain ATCC VR-813 / DSM 19441 / 03DC25 / GPIC) (Chlamydophila caviae).